The chain runs to 206 residues: Stage III sporulation protein AF (206 aa).

The next 2 helical transmembrane spans lie at 1–21 and 34–54; these read MSFL…AIVI and AKMV…FKLF.

The protein localises to the cell membrane. This is Stage III sporulation protein AF (spoIIIAF) from Bacillus subtilis (strain 168).